The sequence spans 208 residues: Protein GrpE (208 aa).

The segment covering 1–25 (MVDNKDFNEELKENIQEELDNETKA) has biased composition (basic and acidic residues). The interval 1–38 (MVDNKDFNEELKENIQEELDNETKAENPNIDEEVEEVS) is disordered. Over residues 29-38 (NIDEEVEEVS) the composition is skewed to acidic residues.

It belongs to the GrpE family. As to quaternary structure, homodimer.

Its subcellular location is the cytoplasm. Functionally, participates actively in the response to hyperosmotic and heat shock by preventing the aggregation of stress-denatured proteins, in association with DnaK and GrpE. It is the nucleotide exchange factor for DnaK and may function as a thermosensor. Unfolded proteins bind initially to DnaJ; upon interaction with the DnaJ-bound protein, DnaK hydrolyzes its bound ATP, resulting in the formation of a stable complex. GrpE releases ADP from DnaK; ATP binding to DnaK triggers the release of the substrate protein, thus completing the reaction cycle. Several rounds of ATP-dependent interactions between DnaJ, DnaK and GrpE are required for fully efficient folding. This Clostridium perfringens (strain 13 / Type A) protein is Protein GrpE.